The chain runs to 526 residues: Peptide chain release factor 3 (526 aa).

In terms of domain architecture, tr-type G spans 8–277 (NKRRTFAIIS…GLTEWAPKPQ (270 aa)). GTP is bound by residues 17–24 (SHPDAGKT), 85–89 (DTPGH), and 139–142 (NKLD).

It belongs to the TRAFAC class translation factor GTPase superfamily. Classic translation factor GTPase family. PrfC subfamily.

It is found in the cytoplasm. Its function is as follows. Increases the formation of ribosomal termination complexes and stimulates activities of RF-1 and RF-2. It binds guanine nucleotides and has strong preference for UGA stop codons. It may interact directly with the ribosome. The stimulation of RF-1 and RF-2 is significantly reduced by GTP and GDP, but not by GMP. The sequence is that of Peptide chain release factor 3 from Actinobacillus pleuropneumoniae serotype 3 (strain JL03).